The chain runs to 612 residues: Poly(A) RNA polymerase, mitochondrial (612 aa).

The N-terminal 57 residues, 1–57 (MNSLVRRSAQQLSLWRTYCIKHNASEAASPGRNAGRPNYEEFIGRHQRQAQCSIVVQ), are a transit peptide targeting the mitochondrion. ATP contacts are provided by residues 83-89 (YCVRQDE) and 228-229 (GC). Mg(2+) is bound by residues D230 and D232. One can recognise a PAP-associated domain in the interval 427-463 (SLSELLLQFFEFYSQFDFHNRAISLNEGKPLSKPDHS). Disordered stretches follow at residues 555–574 (AGAT…KSAS) and 588–612 (SELK…RRSR).

The protein belongs to the DNA polymerase type-B-like family. Requires Mg(2+) as cofactor. Mn(2+) serves as cofactor.

The protein resides in the mitochondrion. It carries out the reaction RNA(n) + ATP = RNA(n)-3'-adenine ribonucleotide + diphosphate. In terms of biological role, polymerase that creates the 3' poly(A) tail of mitochondrial transcripts. This is not required for transcript stability or translation but may maintain mRNA integrity by protecting 3' termini from degradation. In Drosophila melanogaster (Fruit fly), this protein is Poly(A) RNA polymerase, mitochondrial.